Here is a 396-residue protein sequence, read N- to C-terminus: Flavohemoprotein (396 aa).

Residues 1 to 136 (MLDNQTIATV…LADIFINREE (136 aa)) form the Globin domain. Residue H85 coordinates heme b. Residues Y95 and E135 each act as charge relay system in the active site. The tract at residues 147 to 396 (GGWRGLRPFR…YECFGPHKVI (250 aa)) is reductase. One can recognise an FAD-binding FR-type domain in the interval 150–255 (RGLRPFRINR…TAPRGDFFLD (106 aa)). FAD is bound by residues Y188 and 204 to 207 (RQYS). 268–273 (GVGLTP) contributes to the NADP(+) binding site. 389–392 (CFGP) is an FAD binding site.

The protein belongs to the globin family. Two-domain flavohemoproteins subfamily. This sequence in the C-terminal section; belongs to the flavoprotein pyridine nucleotide cytochrome reductase family. The cofactor is heme b. Requires FAD as cofactor.

The catalysed reaction is 2 nitric oxide + NADPH + 2 O2 = 2 nitrate + NADP(+) + H(+). It catalyses the reaction 2 nitric oxide + NADH + 2 O2 = 2 nitrate + NAD(+) + H(+). In terms of biological role, is involved in NO detoxification in an aerobic process, termed nitric oxide dioxygenase (NOD) reaction that utilizes O(2) and NAD(P)H to convert NO to nitrate, which protects the bacterium from various noxious nitrogen compounds. Therefore, plays a central role in the inducible response to nitrosative stress. This Photorhabdus laumondii subsp. laumondii (strain DSM 15139 / CIP 105565 / TT01) (Photorhabdus luminescens subsp. laumondii) protein is Flavohemoprotein.